Reading from the N-terminus, the 174-residue chain is UPF0113 protein APE_0516.1 (174 aa).

The protein belongs to the UPF0113 family.

The chain is UPF0113 protein APE_0516.1 from Aeropyrum pernix (strain ATCC 700893 / DSM 11879 / JCM 9820 / NBRC 100138 / K1).